The sequence spans 222 residues: Deoxyribose-phosphate aldolase (222 aa).

Asp90 acts as the Proton donor/acceptor in catalysis. The active-site Schiff-base intermediate with acetaldehyde is Lys152. Lys181 (proton donor/acceptor) is an active-site residue.

Belongs to the DeoC/FbaB aldolase family. DeoC type 1 subfamily.

It is found in the cytoplasm. The catalysed reaction is 2-deoxy-D-ribose 5-phosphate = D-glyceraldehyde 3-phosphate + acetaldehyde. It participates in carbohydrate degradation; 2-deoxy-D-ribose 1-phosphate degradation; D-glyceraldehyde 3-phosphate and acetaldehyde from 2-deoxy-alpha-D-ribose 1-phosphate: step 2/2. Catalyzes a reversible aldol reaction between acetaldehyde and D-glyceraldehyde 3-phosphate to generate 2-deoxy-D-ribose 5-phosphate. The polypeptide is Deoxyribose-phosphate aldolase (Pectobacterium carotovorum subsp. carotovorum (strain PC1)).